The chain runs to 402 residues: Probable tRNA pseudouridine synthase D (402 aa).

The active-site Nucleophile is the D94. A TRUD domain is found at 175–364 (YILNYYGTQR…PGTRRKLITK (190 aa)).

Belongs to the pseudouridine synthase TruD family.

It carries out the reaction uridine(13) in tRNA = pseudouridine(13) in tRNA. Functionally, could be responsible for synthesis of pseudouridine from uracil-13 in transfer RNAs. In Methanococcus aeolicus (strain ATCC BAA-1280 / DSM 17508 / OCM 812 / Nankai-3), this protein is Probable tRNA pseudouridine synthase D.